Consider the following 209-residue polypeptide: Large ribosomal subunit protein bL9 (209 aa).

Positions 169–209 (RDGASFTEDYDPNAEPGLATEAEEAVADADDNAETNSEESL) are disordered. The segment covering 189–209 (EAEEAVADADDNAETNSEESL) has biased composition (acidic residues).

It belongs to the bacterial ribosomal protein bL9 family.

In terms of biological role, binds to the 23S rRNA. The protein is Large ribosomal subunit protein bL9 of Zymomonas mobilis subsp. mobilis (strain ATCC 31821 / ZM4 / CP4).